We begin with the raw amino-acid sequence, 350 residues long: Serine-threonine kinase receptor-associated protein (350 aa).

WD repeat units follow at residues 12-56, 57-96, 98-137, 141-179, 180-212, 221-262, and 263-302; these read GHTR…GTFL, GHKG…ELMT, AHKH…AEPK, GHTS…EVKS, LNFN…HSAV, EAPA…ESYK, and GHFG…TYGL. Ser312, Ser335, and Ser338 each carry phosphoserine. The segment at 326 to 350 is disordered; sequence AEEELEEIASENSDSIYSSTPEVKA. Over residues 337-350 the composition is skewed to polar residues; the sequence is NSDSIYSSTPEVKA. A Phosphotyrosine modification is found at Tyr342.

Belongs to the WD repeat STRAP family. Part of the core SMN complex that contains SMN1, GEMIN2/SIP1, DDX20/GEMIN3, GEMIN4, GEMIN5, GEMIN6, GEMIN7, GEMIN8 and STRAP/UNRIP. Part of the SMN-Sm complex that contains SMN1, GEMIN2/SIP1, DDX20/GEMIN3, GEMIN4, GEMIN5, GEMIN6, GEMIN7, GEMIN8, STRAP/UNRIP and the Sm proteins SNRPB, SNRPD1, SNRPD2, SNRPD3, SNRPE, SNRPF and SNRPG. Interacts directly with GEMIN6 and GEMIN7. Associates with the SMN complex in the cytoplasm but not in the nucleus. Also interacts with CSDE1/UNR and MAWBP. Interacts with PDPK1. Interacts with TRIM48.

It localises to the cytoplasm. Its subcellular location is the nucleus. The SMN complex catalyzes the assembly of small nuclear ribonucleoproteins (snRNPs), the building blocks of the spliceosome, and thereby plays an important role in the splicing of cellular pre-mRNAs. Most spliceosomal snRNPs contain a common set of Sm proteins SNRPB, SNRPD1, SNRPD2, SNRPD3, SNRPE, SNRPF and SNRPG that assemble in a heptameric protein ring on the Sm site of the small nuclear RNA to form the core snRNP (Sm core). In the cytosol, the Sm proteins SNRPD1, SNRPD2, SNRPE, SNRPF and SNRPG are trapped in an inactive 6S pICln-Sm complex by the chaperone CLNS1A that controls the assembly of the core snRNP. To assemble core snRNPs, the SMN complex accepts the trapped 5Sm proteins from CLNS1A forming an intermediate. Binding of snRNA inside 5Sm triggers eviction of the SMN complex, thereby allowing binding of SNRPD3 and SNRPB to complete assembly of the core snRNP. STRAP plays a role in the cellular distribution of the SMN complex. Negatively regulates TGF-beta signaling but positively regulates the PDPK1 kinase activity by enhancing its autophosphorylation and by significantly reducing the association of PDPK1 with 14-3-3 protein. The polypeptide is Serine-threonine kinase receptor-associated protein (Strap) (Mus musculus (Mouse)).